Reading from the N-terminus, the 367-residue chain is Aspartate-semialdehyde dehydrogenase (367 aa).

NADP(+)-binding positions include 10–13, 37–38, and glutamine 73; these read RGMV and TS. Arginine 102 serves as a coordination point for phosphate. Catalysis depends on cysteine 135, which acts as the Acyl-thioester intermediate. Cysteine 135 is subject to S-cysteinyl cysteine; in inhibited form. Glutamine 162 provides a ligand contact to substrate. Residues 165 to 166 and proline 193 each bind NADP(+); that span reads SG. Residue glutamate 241 participates in substrate binding. A phosphate-binding site is contributed by lysine 244. Arginine 267 is a substrate binding site. Histidine 274 (proton acceptor) is an active-site residue. Residue glutamine 350 participates in NADP(+) binding.

It belongs to the aspartate-semialdehyde dehydrogenase family. In terms of assembly, homodimer.

It catalyses the reaction L-aspartate 4-semialdehyde + phosphate + NADP(+) = 4-phospho-L-aspartate + NADPH + H(+). It functions in the pathway amino-acid biosynthesis; L-lysine biosynthesis via DAP pathway; (S)-tetrahydrodipicolinate from L-aspartate: step 2/4. Its pathway is amino-acid biosynthesis; L-methionine biosynthesis via de novo pathway; L-homoserine from L-aspartate: step 2/3. It participates in amino-acid biosynthesis; L-threonine biosynthesis; L-threonine from L-aspartate: step 2/5. Catalyzes the NADPH-dependent formation of L-aspartate-semialdehyde (L-ASA) by the reductive dephosphorylation of L-aspartyl-4-phosphate. In Escherichia coli O6:H1 (strain CFT073 / ATCC 700928 / UPEC), this protein is Aspartate-semialdehyde dehydrogenase.